Reading from the N-terminus, the 625-residue chain is tRNA (uracil-5-)-methyltransferase homolog A (625 aa).

2 disordered regions span residues 1-37 (MSEN…AAPA) and 145-165 (RPKA…EPPV). Residues 27–37 (PTVSVPPAAPA) show a composition bias toward low complexity. Positions 73–146 (FKLELQNVPR…RPLSVRLARP (74 aa)) constitute an RRM domain. Positions 180–209 (YAEQLERKQLECEQVLQKLAKEIGSTNRAL) form a coiled coil. Ser378 is modified (phosphoserine). Gln411, Glu461, and Asp510 together coordinate S-adenosyl-L-methionine. The active-site Nucleophile is Cys538. The Proton acceptor role is filled by Glu581. The interval 594–625 (GTGVLGPHSPPAQPTPGPPDNTLQETGTFPSS) is disordered. The segment covering 601–612 (HSPPAQPTPGPP) has biased composition (pro residues). Ser602 is subject to Phosphoserine. Over residues 614–625 (NTLQETGTFPSS) the composition is skewed to polar residues.

It belongs to the class I-like SAM-binding methyltransferase superfamily. RNA M5U methyltransferase family.

It localises to the cytoplasm. Its subcellular location is the cytosol. The enzyme catalyses uridine(54) in tRNA + S-adenosyl-L-methionine = 5-methyluridine(54) in tRNA + S-adenosyl-L-homocysteine + H(+). The catalysed reaction is a uridine in mRNA + S-adenosyl-L-methionine = a 5-methyluridine in mRNA + S-adenosyl-L-homocysteine + H(+). S-adenosyl-L-methionine-dependent methyltransferase that catalyzes the formation of 5-methyl-uridine in tRNAs and some mRNAs. Mainly catalyzes the methylation of uridine at position 54 (m5U54) in cytosolic tRNAs. Also able to mediate the formation of 5-methyl-uridine in some mRNAs. The protein is tRNA (uracil-5-)-methyltransferase homolog A of Homo sapiens (Human).